We begin with the raw amino-acid sequence, 189 residues long: Keratin-associated protein 5-2 (189 aa).

8 tandem repeats follow at residues 21–24 (CCKP), 27–30 (CCKP), 33–36 (CCVP), 134–137 (CCKP), 144–147 (CCKP), 159–162 (CCKP), 169–172 (CCKP), and 179–182 (CCAP). The segment at 27–182 (CCKPVCCCVP…CCCQSSCCAP (156 aa)) is 8 X 4 AA repeats of C-C-X-P.

It belongs to the KRTAP type 5 family. In terms of assembly, interacts with hair keratins.

Functionally, in the hair cortex, hair keratin intermediate filaments are embedded in an interfilamentous matrix, consisting of hair keratin-associated protein (KRTAP), which are essential for the formation of a rigid and resistant hair shaft through their extensive disulfide bond cross-linking with abundant cysteine residues of hair keratins. The matrix proteins include the high-sulfur and high-glycine-tyrosine keratins. In Mus musculus (Mouse), this protein is Keratin-associated protein 5-2.